The following is a 582-amino-acid chain: Formate--tetrahydrofolate ligase (582 aa).

Thr-65–Thr-72 is an ATP binding site.

Belongs to the formate--tetrahydrofolate ligase family.

The catalysed reaction is (6S)-5,6,7,8-tetrahydrofolate + formate + ATP = (6R)-10-formyltetrahydrofolate + ADP + phosphate. The protein operates within one-carbon metabolism; tetrahydrofolate interconversion. The protein is Formate--tetrahydrofolate ligase of Aliivibrio fischeri (strain ATCC 700601 / ES114) (Vibrio fischeri).